Reading from the N-terminus, the 882-residue chain is Pentatricopeptide repeat-containing protein At3g03580 (882 aa).

PPR repeat units follow at residues 3-37 (TRVS…GLDS), 38-68 (SDFF…VSPA), 70-104 (NVYL…KVSP), 105-139 (DKYT…GFES), 140-170 (DLFV…MPVR), 171-205 (DLVS…WIVP), 206-240 (DSFT…GVNS), 241-271 (VVVV…MDVR), 272-307 (DSVS…KPDL), 309-340 (TVSS…GFVL), 341-371 (ESTV…MECK), 372-406 (DTVS…EEQA), 407-441 (DHIT…GICI), 442-472 (DLSV…MGTG), 473-507 (DTVT…EVVP), 508-542 (DMAT…GYES), 543-573 (ELQI…MSRR), 574-608 (DVVT…GIVP), 609-639 (DSVV…MKTH), and 645-675 (MIEH…MPIK). The tract at residues 680 to 755 (IWASVLRACR…NPGYSWIEVG (76 aa)) is type E motif. Residues 756–786 (KNVHVFSSGDDSAPQSEAIYKSLEILYSLMA) are type E(+) motif. Residues 787–882 (KEGYIPDPRE…DGTCSCKDRW (96 aa)) are type DYW motif.

This sequence belongs to the PPR family. PCMP-H subfamily.

The protein is Pentatricopeptide repeat-containing protein At3g03580 (PCMP-H23) of Arabidopsis thaliana (Mouse-ear cress).